Reading from the N-terminus, the 450-residue chain is Phosphoglucosamine mutase (450 aa).

Ser-101 functions as the Phosphoserine intermediate in the catalytic mechanism. Residues Ser-101, Asp-240, Asp-242, and Asp-244 each coordinate Mg(2+). Ser-101 carries the post-translational modification Phosphoserine.

Belongs to the phosphohexose mutase family. The cofactor is Mg(2+). In terms of processing, activated by phosphorylation.

It catalyses the reaction alpha-D-glucosamine 1-phosphate = D-glucosamine 6-phosphate. Functionally, catalyzes the conversion of glucosamine-6-phosphate to glucosamine-1-phosphate. This Streptococcus thermophilus (strain CNRZ 1066) protein is Phosphoglucosamine mutase.